The primary structure comprises 297 residues: Aspartate carbamoyltransferase catalytic subunit (297 aa).

Residues arginine 49 and threonine 50 each contribute to the carbamoyl phosphate site. L-aspartate is bound at residue lysine 77. Residues arginine 99, histidine 129, and glutamine 132 each contribute to the carbamoyl phosphate site. L-aspartate contacts are provided by arginine 162 and arginine 215. Carbamoyl phosphate-binding residues include glycine 256 and proline 257.

The protein belongs to the aspartate/ornithine carbamoyltransferase superfamily. ATCase family. As to quaternary structure, heterododecamer (2C3:3R2) of six catalytic PyrB chains organized as two trimers (C3), and six regulatory PyrI chains organized as three dimers (R2).

It catalyses the reaction carbamoyl phosphate + L-aspartate = N-carbamoyl-L-aspartate + phosphate + H(+). Its pathway is pyrimidine metabolism; UMP biosynthesis via de novo pathway; (S)-dihydroorotate from bicarbonate: step 2/3. In terms of biological role, catalyzes the condensation of carbamoyl phosphate and aspartate to form carbamoyl aspartate and inorganic phosphate, the committed step in the de novo pyrimidine nucleotide biosynthesis pathway. The protein is Aspartate carbamoyltransferase catalytic subunit of Legionella pneumophila subsp. pneumophila (strain Philadelphia 1 / ATCC 33152 / DSM 7513).